We begin with the raw amino-acid sequence, 236 residues long: Protein INCA1 (236 aa).

At Ser23 the chain carries Phosphoserine. An interaction with CCNA1 and CCNA1/CDK2 complex; essential for CDK2 inhibitory activity region spans residues 75–99 (GLYPPEQLPPPEMLWRRKKRRPCLE). Residues 90-95 (RRKKRR) carry the Nuclear localization signal motif. A Phosphothreonine modification is found at Thr182. Residues Ser191 and Ser194 each carry the phosphoserine modification.

Belongs to the INCA family. Interacts with CCNA1. Interacts with CCNA2, CCNB1 and CCNE1. Found in a complex with CCNA1 and CDK2. Interacts with ZNF16; the interaction inhibits INCA1 activity and induces the cell cycle process. Interacts with SPACA9. Interacts with the CCNA1/CDK2 complex. Interacts with ING5, DAZAP2, RNF26, USP15, SPOUT1, DPH7, TRIM26 and RAB5C. In terms of processing, phosphorylated when part of a complex with CCNA1 and CDK2. Strongly phosphorylated by CDK2 on its C-terminal region spanning amino acid 149-221. Less intensively phosphorylated by CDK2 on its first 75 amino acid residues. In terms of tissue distribution, detected in testis, and at lower levels in ovary. Detected at very low levels in testis tumors. Down-regulated in bone marrow cells in acute myeloid and lymphoid leukemia patients as compared with normal bone marrow cells.

It localises to the nucleus. It is found in the cytoplasm. Functionally, binds to CDK2-bound cyclins and inhibits the kinase activity of CDK2; binding to cyclins is critical for its function as CDK inhibitor. Inhibits cell growth and cell proliferation and may play a role in cell cycle control. Required for ING5-mediated regulation of S-phase progression, enhancement of Fas-induced apoptosis and inhibition of cell growth. The sequence is that of Protein INCA1 (INCA1) from Homo sapiens (Human).